We begin with the raw amino-acid sequence, 86 residues long: MVVIRLSRGGSKRRPFYNIVAANSANRRDGRFLERVGFYNPVASGGEEALRIAFDRVEHWVSHGAQLSPTAARLVKQAQAKVAPAA.

This sequence belongs to the bacterial ribosomal protein bS16 family.

The sequence is that of Small ribosomal subunit protein bS16 from Leptothrix cholodnii (strain ATCC 51168 / LMG 8142 / SP-6) (Leptothrix discophora (strain SP-6)).